We begin with the raw amino-acid sequence, 358 residues long: Probable butyrate kinase (358 aa).

This sequence belongs to the acetokinase family.

It is found in the cytoplasm. It carries out the reaction butanoate + ATP = butanoyl phosphate + ADP. This is Probable butyrate kinase from Oceanobacillus iheyensis (strain DSM 14371 / CIP 107618 / JCM 11309 / KCTC 3954 / HTE831).